We begin with the raw amino-acid sequence, 4923 residues long: Bridge-like lipid transfer protein family member 1 (4923 aa).

The chain crosses the membrane as a helical span at residues 25–45 (FVWLLVATIMSCGWIIYLTYY). 21 disordered regions span residues 160–179 (NRDE…SVHI), 606–631 (HSKS…KPRW), 1203–1277 (SLHV…SARL), 1300–1334 (FSSE…DSST), 1357–1400 (TEEF…SVEG), 1471–1494 (TNKR…SEES), 1630–1660 (SAAK…DLSI), 1878–1948 (RDGV…PDSS), 2191–2235 (SKSH…LQCN), 2262–2281 (PHRA…RTGN), 2355–2375 (NTLD…QEDL), 2550–2655 (RYTA…SEQS), 2885–2910 (IRQP…VSIN), 3564–3596 (YSNS…IKVE), 3645–3695 (FSPT…RKSA), 3739–3797 (LHPS…SLQS), 3848–3884 (GMRD…AKGK), 4017–4071 (PTSA…TGPP), 4102–4124 (AVTG…SSVT), 4249–4309 (DGQT…AAAQ), and 4797–4827 (RMFA…EKEE). The segment covering 1210–1226 (SHSSASSSEENSSSSAA) has biased composition (low complexity). Positions 1237–1248 (PSPSTELMNVTT) are enriched in polar residues. The segment covering 1260–1271 (SPLRSPLKRQSS) has biased composition (low complexity). Over residues 1641–1658 (TEGTTPGSLSTPHGQTDL) the composition is skewed to polar residues. A compositionally biased stretch (low complexity) spans 1887-1898 (SSGSQTGSGYST). Positions 1907–1920 (NDAQSPASEPNNNS) are enriched in polar residues. The segment covering 1921–1931 (DSDEQDEGVES) has biased composition (acidic residues). Composition is skewed to polar residues over residues 2208–2218 (PYQSLSYTSGD) and 2267–2281 (EQTA…RTGN). A compositionally biased stretch (polar residues) spans 2550-2560 (RYTAGSSSPTP). Positions 2606–2624 (TRSREPRGRGTLGRSERRT) are enriched in basic and acidic residues. Positions 3581–3595 (KRSDRPREDLPDIKV) are enriched in basic and acidic residues. The segment covering 3746–3770 (TEHEDLALRRSCERSSRSLDQDSPP) has biased composition (basic and acidic residues). Positions 4017-4039 (PTSATYPSEGQHTPSSTPPSVHN) are enriched in polar residues. The segment covering 4044-4056 (PGGPSTGLGSPLG) has biased composition (low complexity). Composition is skewed to polar residues over residues 4249–4268 (DGQT…TPSH), 4276–4286 (TGRTRSVSDSS), and 4804–4814 (GQKSPTTQQDE). Over residues 4816 to 4827 (SSDKKEEREKEE) the composition is skewed to basic and acidic residues.

It is found in the cell membrane. The protein localises to the endoplasmic reticulum membrane. Its subcellular location is the mitochondrion membrane. Tube-forming lipid transport protein which provides phosphatidylethanolamine for glycosylphosphatidylinositol (GPI) anchor synthesis in the endoplasmic reticulum. Plays a role in endosomal trafficking and endosome recycling. Also involved in the actin cytoskeleton and cilia structural dynamics. Acts as a regulator of phagocytosis. This chain is Bridge-like lipid transfer protein family member 1 (bltp1), found in Danio rerio (Zebrafish).